The chain runs to 404 residues: MCSIGEDDFGDEGAAHAMVVEALPLGIVLSPGNCSKCDVNSNELYKLNFREAECRECFLAYARHKFRAALGAAKILPRNAEVLLVLDGSAKSLVLLDMLHFAQTQNTFKRLHCNVHVVYVEEQHVQDRDPVGLEDLLSVSRQYAPFEFYVIELGQGCSLQRIKDYSPSLKANNELIYKLQKLQSLTARQDYLQQHRKNLICSVAQSLHCTHVFESNISVDLATQLLTAIALGRGASAALDVALLDDRLSGDVKLLRPLKDLSEQEITFYIHAQRLKPLFQNGSHYGMERGQTASIQNLTSAFVANLQQNYASTVSTVFRTGDKIAVNSNPEQASCVHCRSALDSELSDTLLAIEYSRSVSEAGVSLNKNEKDLEGLAKKRLEKQDGLCHACRTIQAEFDSGNLL.

This sequence belongs to the CTU2/NCS2 family.

It is found in the cytoplasm. The protein operates within tRNA modification; 5-methoxycarbonylmethyl-2-thiouridine-tRNA biosynthesis. Plays a central role in 2-thiolation of mcm(5)S(2)U at tRNA wobble positions of tRNA(Lys), tRNA(Glu) and tRNA(Gln). May act by forming a heterodimer with NCS6/CTU1 that ligates sulfur from thiocarboxylated URM1 onto the uridine of tRNAs at wobble position. This chain is Cytoplasmic tRNA 2-thiolation protein 2, found in Drosophila yakuba (Fruit fly).